Here is a 149-residue protein sequence, read N- to C-terminus: Active regulator of SIRT1 (149 aa).

The segment at 1–64 is disordered; the sequence is MSVSLLRKGL…GLRHDQKATA (64 aa). The span at 8–19 shows a compositional bias: basic and acidic residues; it reads KGLDLLREERSG. Positions 30-41 are enriched in low complexity; the sequence is SSKPKPCLSSSK. A compositionally biased stretch (basic residues) spans 43–52; that stretch reads GMRKQLRRLK.

This sequence belongs to the AROS family. Part of the small subunit (SSU) processome, composed of more than 70 proteins and the RNA chaperone small nucleolar RNA (snoRNA) U3.

Its subcellular location is the nucleus. The protein localises to the nucleolus. Its function is as follows. Part of the small subunit (SSU) processome, first precursor of the small eukaryotic ribosomal subunit. During the assembly of the SSU processome in the nucleolus, many ribosome biogenesis factors, an RNA chaperone and ribosomal proteins associate with the nascent pre-rRNA and work in concert to generate RNA folding, modifications, rearrangements and cleavage as well as targeted degradation of pre-ribosomal RNA by the RNA exosome. Acts as a chaperone that specifically mediates the integration of RPS19 in state post-A1. Direct regulator of SIRT1. This chain is Active regulator of SIRT1 (rps19bp1), found in Xenopus tropicalis (Western clawed frog).